The chain runs to 180 residues: Stathmin-3 (180 aa).

S-palmitoyl cysteine attachment occurs at residues C22 and C24. The region spanning 38–180 (GDMEVKQLDK…NKEQREEMSG (143 aa)) is the SLD domain. Phosphoserine is present on residues S50, S60, S65, S68, S72, S73, and S81. Positions 59–82 (KSPSDLSPESPMLSSPPKKKDTSL) are disordered. Residues 60–74 (SPSDLSPESPMLSSP) are compositionally biased toward low complexity. Positions 75-179 (PKKKDTSLEE…RNKEQREEMS (105 aa)) form a coiled coil.

Belongs to the stathmin family. In terms of assembly, interacts with STAT3. Interacts with CLU (secreted form); this interaction may act as an important modulator during neuronal differentiation. N-terminal palmitoylation promotes specific anchoring to the cytosolic leaflet of Golgi membranes and subsequent vesicular trafficking along dendrites and axons. Neuronal Stathmins are substrates for palmitoyltransferases ZDHHC3, ZDHHC7 and ZDHHC15. Neuron specific.

Its subcellular location is the golgi apparatus. It is found in the cell projection. It localises to the growth cone. The protein resides in the axon. The protein localises to the cytoplasm. Its subcellular location is the cytosol. In terms of biological role, exhibits microtubule-destabilizing activity, which is antagonized by STAT3. The protein is Stathmin-3 (STMN3) of Homo sapiens (Human).